Here is a 330-residue protein sequence, read N- to C-terminus: AH receptor-interacting protein (330 aa).

At S43 the chain carries Phosphoserine. Residues 54–146 enclose the PPIase FKBP-type domain; that stretch reads RVRGKPMELI…DLDALQQNPQ (93 aa). 3 TPR repeats span residues 179–212, 231–264, and 265–298; these read VPVI…LKNL, TPLL…YDDN, and VKAY…DPAM.

As to quaternary structure, interacts with RET in the pituitary gland; this interaction prevents the formation of the AIP-survivin complex.

The protein localises to the cytoplasm. May play a positive role in AHR-mediated (aromatic hydrocarbon receptor) signaling, possibly by influencing its receptivity for ligand and/or its nuclear targeting. This chain is AH receptor-interacting protein (AIP), found in Bos taurus (Bovine).